Here is a 622-residue protein sequence, read N- to C-terminus: Coiled-coil domain-containing protein 17 (622 aa).

Coiled-coil stretches lie at residues 81–102 (RSALKRLTEEVQWLRLSLQEMR), 146–207 (ARRV…LEVL), and 294–320 (GELPVVEAENRRLEAEILALQMQRGRA). Disordered stretches follow at residues 334–356 (SLQPKGRRDPPLLPPPVAPPLPP) and 584–622 (PAVGFADPPPRTEEPLSGVKDRDEGLGPHHSSDLPPVSF). A compositionally biased stretch (pro residues) spans 344-356 (PLLPPPVAPPLPP). Basic and acidic residues predominate over residues 593-615 (PRTEEPLSGVKDRDEGLGPHHSS).

The protein is Coiled-coil domain-containing protein 17 (CCDC17) of Homo sapiens (Human).